Consider the following 513-residue polypeptide: ATP synthase subunit alpha (513 aa).

169–176 (GDRQTGKT) provides a ligand contact to ATP.

Belongs to the ATPase alpha/beta chains family. As to quaternary structure, F-type ATPases have 2 components, CF(1) - the catalytic core - and CF(0) - the membrane proton channel. CF(1) has five subunits: alpha(3), beta(3), gamma(1), delta(1), epsilon(1). CF(0) has three main subunits: a(1), b(2) and c(9-12). The alpha and beta chains form an alternating ring which encloses part of the gamma chain. CF(1) is attached to CF(0) by a central stalk formed by the gamma and epsilon chains, while a peripheral stalk is formed by the delta and b chains.

The protein localises to the cell inner membrane. The catalysed reaction is ATP + H2O + 4 H(+)(in) = ADP + phosphate + 5 H(+)(out). Produces ATP from ADP in the presence of a proton gradient across the membrane. The alpha chain is a regulatory subunit. The chain is ATP synthase subunit alpha from Aliivibrio fischeri (strain ATCC 700601 / ES114) (Vibrio fischeri).